The following is a 267-amino-acid chain: Aspartate/glutamate leucyltransferase (267 aa).

The segment at 246-267 is disordered; sequence EQEEQTRPLFRPSATGFSTGQE.

Belongs to the R-transferase family. Bpt subfamily.

The protein resides in the cytoplasm. The enzyme catalyses N-terminal L-glutamyl-[protein] + L-leucyl-tRNA(Leu) = N-terminal L-leucyl-L-glutamyl-[protein] + tRNA(Leu) + H(+). The catalysed reaction is N-terminal L-aspartyl-[protein] + L-leucyl-tRNA(Leu) = N-terminal L-leucyl-L-aspartyl-[protein] + tRNA(Leu) + H(+). Its function is as follows. Functions in the N-end rule pathway of protein degradation where it conjugates Leu from its aminoacyl-tRNA to the N-termini of proteins containing an N-terminal aspartate or glutamate. The protein is Aspartate/glutamate leucyltransferase of Granulibacter bethesdensis (strain ATCC BAA-1260 / CGDNIH1).